Here is a 206-residue protein sequence, read N- to C-terminus: MARYLGPKLKMSRRENIDLFLKSGVRAIDSKCKIEQPPGQHGARKPRLSDYGLQLREKQKVRRIYGILERQFRNYYQEAARLKGNTGESLLQLLESRLDNVVYRMGFGATRAESRQLVSHKAIMVNNHIVNIASYQVAINDKISIRDKAKKQSRIRASLELAEQREKPTWLEVDIVKMEGIFKKIPERIHLSAHINEHMIVELYSK.

The S4 RNA-binding domain maps to 96 to 168 (SRLDNVVYRM…LELAEQREKP (73 aa)).

It belongs to the universal ribosomal protein uS4 family. As to quaternary structure, part of the 30S ribosomal subunit. Contacts protein S5. The interaction surface between S4 and S5 is involved in control of translational fidelity.

Functionally, one of the primary rRNA binding proteins, it binds directly to 16S rRNA where it nucleates assembly of the body of the 30S subunit. With S5 and S12 plays an important role in translational accuracy. This is Small ribosomal subunit protein uS4 from Baumannia cicadellinicola subsp. Homalodisca coagulata.